Here is a 295-residue protein sequence, read N- to C-terminus: ATP-dependent (S)-NAD(P)H-hydrate dehydratase (295 aa).

One can recognise a YjeF C-terminal domain in the interval 9-289 (LLERARNLVP…DQIHQVFDDL (281 aa)). Residues G109 and 162–168 (NAIEFCR) each bind (6S)-NADPHX. ATP-binding positions include 193-197 (KGLND) and 214-223 (GSGRRCGGQG). D224 serves as a coordination point for (6S)-NADPHX.

Belongs to the NnrD/CARKD family. It depends on Mg(2+) as a cofactor.

It catalyses the reaction (6S)-NADHX + ATP = ADP + phosphate + NADH + H(+). The catalysed reaction is (6S)-NADPHX + ATP = ADP + phosphate + NADPH + H(+). Functionally, catalyzes the dehydration of the S-form of NAD(P)HX at the expense of ATP, which is converted to ADP. Together with NAD(P)HX epimerase, which catalyzes the epimerization of the S- and R-forms, the enzyme allows the repair of both epimers of NAD(P)HX, a damaged form of NAD(P)H that is a result of enzymatic or heat-dependent hydration. The chain is ATP-dependent (S)-NAD(P)H-hydrate dehydratase from Anopheles darlingi (Mosquito).